Consider the following 1984-residue polypeptide: Spermatogenesis-associated protein 31H1 (1984 aa).

Disordered regions lie at residues 448–467 (MGLTKSKNQSMKSPGTTPGP), 1045–1067 (PMEESEDSQSDSQTRISESQHSL), 1181–1287 (YRER…SDSK), 1326–1346 (RIGATQTSTASLKRQPKKPSQ), and 1439–1984 (QQPR…EATR). Polar residues-rich tracts occupy residues 450–463 (LTKSKNQSMKSPGT), 1058–1067 (TRISESQHSL), and 1205–1226 (TQASKSPTSTIDLQSGPSQSPA). Over residues 1238-1247 (SRPDLVEKTK) the composition is skewed to basic and acidic residues. 2 stretches are compositionally biased toward polar residues: residues 1458–1471 (TDSQSGIAFQTASV) and 1492–1508 (RNETSSQESKNLSTPGT). 2 stretches are compositionally biased toward basic and acidic residues: residues 1532–1558 (DKLTHKEHNHPSFYRERTPRGPSERTR) and 1568–1579 (SPSERSQRSSLE). Repeat copies occupy residues 1593 to 1600 (PSRKNHSS), 1601 to 1608 (PSERSWRS), and 1609 to 1616 (PSQRNHCS). The tract at residues 1593 to 1935 (PSRKNHSSPS…CSPSERSRRS (343 aa)) is 27 X 8 AA approximate tandem repeat of P-S-E-R-S-H-H-S. Positions 1599-1610 (SSPSERSWRSPS) are enriched in low complexity. A compositionally biased stretch (basic and acidic residues) spans 1620 to 1630 (RSCHSLSERGL). Over residues 1636–1647 (RSHRGPSQRRHH) the composition is skewed to basic residues. 3 repeat units span residues 1641–1648 (PSQRRHHS), 1649–1656 (PSERSHRS), and 1657–1664 (PSERSHRS). The span at 1648–1667 (SPSERSHRSPSERSHRSSSE) shows a compositional bias: basic and acidic residues. Positions 1668 to 1679 (RRHRSPSQRSHR) are enriched in basic residues. A compositionally biased stretch (basic and acidic residues) spans 1680-1691 (GPSERSHCSPSE). A run of 19 repeats spans residues 1681–1688 (PSERSHCS), 1689–1696 (PSERRHRS), 1697–1704 (PSQRSHRG), 1705–1712 (PSERRHHS), 1713–1720 (PSKRSHRS), 1721–1728 (PARRSHRS), 1729–1736 (PSERSHHS), 1737–1744 (PSERSHHS), 1745–1752 (PSERRHHS), 1753–1760 (PSERSHCS), 1761–1768 (PSERSHCS), 1769–1776 (PSERRHRS), 1777–1784 (PSERRHHS), 1785–1792 (PSEKSHHS), 1793–1800 (PSERSHHS), 1801–1808 (PSERRRHS), 1848–1855 (PSEKSHLS), 1864–1871 (PSERRGHS), and 1880–1887 (PSERSHRS). Positions 1692–1727 (RRHRSPSQRSHRGPSERRHHSPSKRSHRSPARRSHR) are enriched in basic residues. The segment covering 1728–1869 (SPSERSHHSP…SRCSPSERRG (142 aa)) has biased composition (basic and acidic residues). Basic and acidic residues-rich tracts occupy residues 1895–1917 (RTSERSHRSSCERTRHSPSEMRP), 1928–1941 (PSERSRRSPLKEGL), and 1949–1959 (RPSHSLSRDFK). 2 repeat units span residues 1921–1928 (SGRNHCSP) and 1929–1935 (SERSRRS). Positions 1960–1969 (NQTTLLGTTH) are enriched in polar residues.

Expressed in sperm (at protein level).

The polypeptide is Spermatogenesis-associated protein 31H1 (Homo sapiens (Human)).